Here is a 170-residue protein sequence, read N- to C-terminus: Shikimate kinase (170 aa).

15–20 (GTGKTT) serves as a coordination point for ATP. Threonine 19 contacts Mg(2+). Substrate contacts are provided by aspartate 37, arginine 61, and glycine 82. An ATP-binding site is contributed by arginine 120. Residue arginine 138 coordinates substrate. Position 154 (glutamine 154) interacts with ATP.

This sequence belongs to the shikimate kinase family. As to quaternary structure, monomer. The cofactor is Mg(2+).

The protein resides in the cytoplasm. The catalysed reaction is shikimate + ATP = 3-phosphoshikimate + ADP + H(+). The protein operates within metabolic intermediate biosynthesis; chorismate biosynthesis; chorismate from D-erythrose 4-phosphate and phosphoenolpyruvate: step 5/7. Functionally, catalyzes the specific phosphorylation of the 3-hydroxyl group of shikimic acid using ATP as a cosubstrate. The protein is Shikimate kinase of Staphylococcus epidermidis (strain ATCC 35984 / DSM 28319 / BCRC 17069 / CCUG 31568 / BM 3577 / RP62A).